We begin with the raw amino-acid sequence, 633 residues long: Probable potassium transport system protein Kup 3 (633 aa).

12 helical membrane passes run 24 to 44, 61 to 81, 114 to 134, 148 to 168, 180 to 200, 222 to 242, 258 to 278, 298 to 318, 348 to 368, 377 to 397, 405 to 425, and 427 to 447; these read LVLA…LYAF, VLGI…LKYV, LVLG…TPAI, PALS…LFFV, FGPV…IHIF, IGSA…AEAL, WFSL…AFVL, IPMV…VISG, IFMP…VLFF, AYGI…FIVM, LTAA…FLAA, and IAKF…MALI.

The protein belongs to the HAK/KUP transporter (TC 2.A.72) family.

Its subcellular location is the cell inner membrane. It catalyses the reaction K(+)(in) + H(+)(in) = K(+)(out) + H(+)(out). Transport of potassium into the cell. Likely operates as a K(+):H(+) symporter. The chain is Probable potassium transport system protein Kup 3 from Rhizobium johnstonii (strain DSM 114642 / LMG 32736 / 3841) (Rhizobium leguminosarum bv. viciae).